The sequence spans 62 residues: Omega-conotoxin-like Bu11 (62 aa).

A signal peptide spans 1-7 (ACQLITA). The propeptide occupies 8–27 (EDSRGTQLHRALRSTSKVSK). 3 disulfides stabilise this stretch: C31–C46, C38–C49, and C45–C56.

It belongs to the conotoxin O1 superfamily. Expressed by the venom duct.

It is found in the secreted. Its function is as follows. Omega-conotoxins act at presynaptic membranes, they bind and block voltage-gated calcium channels (Cav). This Conus bullatus (Bubble cone) protein is Omega-conotoxin-like Bu11.